The primary structure comprises 116 residues: Large ribosomal subunit protein bL17 (116 aa).

It belongs to the bacterial ribosomal protein bL17 family. As to quaternary structure, part of the 50S ribosomal subunit. Contacts protein L32.

The protein is Large ribosomal subunit protein bL17 of Helicobacter pylori (strain G27).